Consider the following 199-residue polypeptide: Transgelin-3 (199 aa).

Residues 24-136 (ADLENKLVDW…RTLMALGSVA (113 aa)) enclose the Calponin-homology (CH) domain. Phosphoserine is present on S163. A Calponin-like repeat occupies 174 to 199 (IGLQMGSNKGASQAGMTGYGMPRQIM). Residues 176 to 188 (LQMGSNKGASQAG) show a composition bias toward polar residues. The tract at residues 176-199 (LQMGSNKGASQAGMTGYGMPRQIM) is disordered.

Belongs to the calponin family. In terms of tissue distribution, widely expressed in the brain. Expression is increased in the superior frontal cortex of alcoholics, but not in the motor cortex or cerebellum.

The chain is Transgelin-3 (TAGLN3) from Homo sapiens (Human).